A 622-amino-acid polypeptide reads, in one-letter code: Presenilin-A (622 aa).

Basic and acidic residues predominate over residues M1–K16. Disordered stretches follow at residues M1 to N65 and V132 to E160. The Cytoplasmic segment spans residues M1–S168. Low complexity predominate over residues S21–N62. A compositionally biased stretch (acidic residues) spans D147–E160. A helical transmembrane segment spans residues E169–I189. At R190–S227 the chain is on the lumenal side. The helical transmembrane segment at V228–L248 threads the bilayer. The Cytoplasmic portion of the chain corresponds to Y249–S265. A helical membrane pass occupies residues I266–L286. The Lumenal portion of the chain corresponds to G287–D289. A helical transmembrane segment spans residues Y290–W310. Y311 is a topological domain (cytoplasmic). Residues S312–F332 form a helical membrane-spanning segment. Topologically, residues S333–W341 are lumenal. A helical transmembrane segment spans residues G342–L362. D351 is a catalytic residue. The Cytoplasmic segment spans residues R363–R538. The segment at N419–I477 is disordered. Residues E432–S466 show a composition bias toward low complexity. Residues L539–I559 traverse the membrane as a helical segment. D543 is an active-site residue. The Lumenal segment spans residues T560–V562. The helical transmembrane segment at F563–F583 threads the bilayer. The Cytoplasmic segment spans residues R584–P588. Residues P588–L590 carry the PAL motif. Positions A589–I609 form an intramembrane region, helical. The Cytoplasmic portion of the chain corresponds to Q610–V622.

Belongs to the peptidase A22A family. In terms of assembly, homodimer. Component of the gamma-secretase complex, a complex composed of a presenilin homodimer, nicastrin, aph1 and pen2.

Its subcellular location is the endoplasmic reticulum membrane. It is found in the golgi apparatus membrane. In terms of biological role, probable catalytic subunit of the gamma-secretase complex, an endoprotease complex that catalyzes the intramembrane cleavage of integral membrane proteins such as Notch receptors. Requires the other members of the gamma-secretase complex to have a protease activity. This chain is Presenilin-A (psenA), found in Dictyostelium discoideum (Social amoeba).